Consider the following 432-residue polypeptide: Serine hydroxymethyltransferase (432 aa).

(6S)-5,6,7,8-tetrahydrofolate contacts are provided by residues L117 and 121–123 (GHL). N6-(pyridoxal phosphate)lysine is present on K226. 366 to 368 (SPF) lines the (6S)-5,6,7,8-tetrahydrofolate pocket.

This sequence belongs to the SHMT family. As to quaternary structure, homodimer. Pyridoxal 5'-phosphate is required as a cofactor.

The protein localises to the cytoplasm. The catalysed reaction is (6R)-5,10-methylene-5,6,7,8-tetrahydrofolate + glycine + H2O = (6S)-5,6,7,8-tetrahydrofolate + L-serine. It functions in the pathway one-carbon metabolism; tetrahydrofolate interconversion. Its pathway is amino-acid biosynthesis; glycine biosynthesis; glycine from L-serine: step 1/1. In terms of biological role, catalyzes the reversible interconversion of serine and glycine with tetrahydrofolate (THF) serving as the one-carbon carrier. This reaction serves as the major source of one-carbon groups required for the biosynthesis of purines, thymidylate, methionine, and other important biomolecules. Also exhibits THF-independent aldolase activity toward beta-hydroxyamino acids, producing glycine and aldehydes, via a retro-aldol mechanism. This chain is Serine hydroxymethyltransferase, found in Salinibacter ruber (strain DSM 13855 / M31).